A 230-amino-acid polypeptide reads, in one-letter code: Type II restriction enzyme Eco47I (230 aa).

It catalyses the reaction Endonucleolytic cleavage of DNA to give specific double-stranded fragments with terminal 5'-phosphates.. Its function is as follows. A P subtype restriction enzyme that recognizes the double-stranded sequence 5'-GGWCC-3' and cleaves after G-1. The polypeptide is Type II restriction enzyme Eco47I (Escherichia coli).